The primary structure comprises 121 residues: UPF0102 protein Xfasm12_1748 (121 aa).

The protein belongs to the UPF0102 family.

In Xylella fastidiosa (strain M12), this protein is UPF0102 protein Xfasm12_1748.